The primary structure comprises 88 residues: Putative defensin-like protein 264 (88 aa).

The signal sequence occupies residues 1 to 26; sequence MEKMVLRKVVLLAILLSLSCLWVAKA. 3 disulfides stabilise this stretch: Cys-47–Cys-65, Cys-53–Cys-70, and Cys-57–Cys-72.

The protein belongs to the DEFL family.

The protein localises to the secreted. This chain is Putative defensin-like protein 264, found in Arabidopsis thaliana (Mouse-ear cress).